A 423-amino-acid polypeptide reads, in one-letter code: 4-hydroxy-3-methylbut-2-en-1-yl diphosphate synthase (flavodoxin) (423 aa).

Cys-307, Cys-310, Cys-353, and Glu-360 together coordinate [4Fe-4S] cluster.

It belongs to the IspG family. [4Fe-4S] cluster serves as cofactor.

It catalyses the reaction (2E)-4-hydroxy-3-methylbut-2-enyl diphosphate + oxidized [flavodoxin] + H2O + 2 H(+) = 2-C-methyl-D-erythritol 2,4-cyclic diphosphate + reduced [flavodoxin]. Its pathway is isoprenoid biosynthesis; isopentenyl diphosphate biosynthesis via DXP pathway; isopentenyl diphosphate from 1-deoxy-D-xylulose 5-phosphate: step 5/6. Converts 2C-methyl-D-erythritol 2,4-cyclodiphosphate (ME-2,4cPP) into 1-hydroxy-2-methyl-2-(E)-butenyl 4-diphosphate. The sequence is that of 4-hydroxy-3-methylbut-2-en-1-yl diphosphate synthase (flavodoxin) from Brucella anthropi (strain ATCC 49188 / DSM 6882 / CCUG 24695 / JCM 21032 / LMG 3331 / NBRC 15819 / NCTC 12168 / Alc 37) (Ochrobactrum anthropi).